Consider the following 96-residue polypeptide: YcgL domain-containing protein VS_0884 (96 aa).

Residues 1 to 84 (MLCSIYKSSK…PPVNELELHK (84 aa)) enclose the YcgL domain.

This chain is YcgL domain-containing protein VS_0884, found in Vibrio atlanticus (strain LGP32) (Vibrio splendidus (strain Mel32)).